The primary structure comprises 951 residues: Glycine dehydrogenase (decarboxylating) 1 (951 aa).

Residue Lys-703 is modified to N6-(pyridoxal phosphate)lysine.

It belongs to the GcvP family. As to quaternary structure, the glycine cleavage system is composed of four proteins: P, T, L and H. Pyridoxal 5'-phosphate is required as a cofactor.

The catalysed reaction is N(6)-[(R)-lipoyl]-L-lysyl-[glycine-cleavage complex H protein] + glycine + H(+) = N(6)-[(R)-S(8)-aminomethyldihydrolipoyl]-L-lysyl-[glycine-cleavage complex H protein] + CO2. In terms of biological role, the glycine cleavage system catalyzes the degradation of glycine. The P protein binds the alpha-amino group of glycine through its pyridoxal phosphate cofactor; CO(2) is released and the remaining methylamine moiety is then transferred to the lipoamide cofactor of the H protein. This is Glycine dehydrogenase (decarboxylating) 1 from Pseudomonas fluorescens (strain ATCC BAA-477 / NRRL B-23932 / Pf-5).